Reading from the N-terminus, the 203-residue chain is Ribosomal RNA large subunit methyltransferase E (203 aa).

The S-adenosyl-L-methionine site is built by Gly51, Trp53, Asp69, Asp85, and Asp109. Lys149 (proton acceptor) is an active-site residue.

This sequence belongs to the class I-like SAM-binding methyltransferase superfamily. RNA methyltransferase RlmE family.

It localises to the cytoplasm. The enzyme catalyses uridine(2552) in 23S rRNA + S-adenosyl-L-methionine = 2'-O-methyluridine(2552) in 23S rRNA + S-adenosyl-L-homocysteine + H(+). Functionally, specifically methylates the uridine in position 2552 of 23S rRNA at the 2'-O position of the ribose in the fully assembled 50S ribosomal subunit. This Methanoculleus marisnigri (strain ATCC 35101 / DSM 1498 / JR1) protein is Ribosomal RNA large subunit methyltransferase E.